A 338-amino-acid polypeptide reads, in one-letter code: MITAESEHKIAPWKIEEVNKLKELLKNGQIVALVDMMEVPARQLQEIRDKIRGTMTLKMSRNTLIERAIKEVAEETGNPEFAKLADYIDKGAAIITTDMNPFKLYKTLEESKSPAPIKGGAVAPCDIEVKAGSTGMPPGPFLGELKSVGIPAAIEKGKIGIKEDKVVAKAGEVVSHKLAVVLSALGIKPVTVGLNLLAAYEDGVIYTPDVLKIDEEEFVQKIQDAYSKAFNLSVNAAIPTAQTIETLLQKAFANARAVSIESAFLTEKTTDDILGKAYSQMLAVAREVGDDALDDELKEKLSTAVVETKAEVEEAKEEEKEEKKEEAAPAAAGLGLLF.

Positions 309–327 (KAEVEEAKEEEKEEKKEEA) are enriched in basic and acidic residues. A disordered region spans residues 309–338 (KAEVEEAKEEEKEEKKEEAAPAAAGLGLLF).

It belongs to the universal ribosomal protein uL10 family. In terms of assembly, part of the 50S ribosomal subunit. Forms part of the ribosomal stalk which helps the ribosome interact with GTP-bound translation factors. Forms a heptameric L10(L12)2(L12)2(L12)2 complex, where L10 forms an elongated spine to which the L12 dimers bind in a sequential fashion.

In terms of biological role, forms part of the ribosomal stalk, playing a central role in the interaction of the ribosome with GTP-bound translation factors. This chain is Large ribosomal subunit protein uL10, found in Methanothermococcus thermolithotrophicus (Methanococcus thermolithotrophicus).